A 478-amino-acid chain; its full sequence is Alpha-(1,3)-fucosyltransferase FucT (478 aa).

Substrate contacts are provided by residues G94, 186–189 (VASN), R195, 222–225 (VKNK), N240, and 246–250 (YVTEK). Positions 347–353 (DNPFIFC) are important for acceptor specificity. 10 consecutive repeat copies span residues 364–370 (DDLRVNY), 371–377 (DDLRVNY), 378–384 (DDLRINY), 385–391 (DDLRVNY), 392–398 (DDLRINY), 399–405 (DDLRVNY), 406–412 (DDLRVNY), 413–419 (DDLRINY), 420–426 (DDLRVNY), and 427–433 (DDLRVNY). A 10 X 7 AA tandem repeat of D-D-L-R-[IV]-N-Y region spans residues 364-433 (DDLRVNYDDL…VNYDDLRVNY (70 aa)). Positions 434–478 (ERLLSKATPLLELSQNTTSKIYRKAYQKSLPLLRAIRRWVKKLGL) are may be involved in membrane binding.

This sequence belongs to the glycosyltransferase 10 family. As to quaternary structure, homodimer.

The protein localises to the membrane. It is found in the cytoplasm. It carries out the reaction a beta-D-galactosyl-(1-&gt;4)-N-acetyl-beta-D-glucosaminyl derivative + GDP-beta-L-fucose = a beta-D-galactosyl-(1-&gt;4)-[alpha-L-fucosyl-(1-&gt;3)]-N-acetyl-beta-D-glucosaminyl derivative + GDP + H(+). It participates in lipopolysaccharide biosynthesis; LPS oligosaccharide biosynthesis. Functionally, involved in the biosynthesis of the Lewis X (LeX) trisaccharide of the lipopolysaccharide (LPS) O-antigen. Catalyzes the addition of fucose in alpha 1-3 linkage to Gal-beta-1-4-GlcNAc-beta-O-R (LacNAc-R) type II acceptor. The sequence is that of Alpha-(1,3)-fucosyltransferase FucT from Helicobacter pylori (Campylobacter pylori).